The chain runs to 196 residues: Adenosylcobinamide-phosphate guanylyltransferase (196 aa).

In terms of assembly, homodimer.

The catalysed reaction is adenosylcob(III)inamide phosphate + GTP + H(+) = adenosylcob(III)inamide-GDP + diphosphate. Its pathway is cofactor biosynthesis; adenosylcobalamin biosynthesis. Guanylyltransferase that catalyzes the synthesis of adenosylcobinamide-GDP (AdoCbi-GDP) from adenosylcobinamide-phosphate (AdoCbi-P) and GTP. Is involved in adenosylcobalamin biosynthesis. Binds one GTP per dimer. Cannot use other NTPs or GDP. Does not display AdoCbi kinase activity. Is also able to catalyze the condensation of 2-phospho-L-lactate (LP) with GTP in vitro to form PPi and (2S)-lactyl-2-diphospho-5'-guanosine (LPPG), but is much less efficient than CofC, the presumed enzyme catalyzing this reaction in vivo. The sequence is that of Adenosylcobinamide-phosphate guanylyltransferase (cobY) from Methanocaldococcus jannaschii (strain ATCC 43067 / DSM 2661 / JAL-1 / JCM 10045 / NBRC 100440) (Methanococcus jannaschii).